The following is a 532-amino-acid chain: Glucose-6-phosphate isomerase (532 aa).

Glutamate 330 (proton donor) is an active-site residue. Residues histidine 359 and lysine 461 contribute to the active site.

It belongs to the GPI family.

It localises to the cytoplasm. It carries out the reaction alpha-D-glucose 6-phosphate = beta-D-fructose 6-phosphate. Its pathway is carbohydrate biosynthesis; gluconeogenesis. It functions in the pathway carbohydrate degradation; glycolysis; D-glyceraldehyde 3-phosphate and glycerone phosphate from D-glucose: step 2/4. Functionally, catalyzes the reversible isomerization of glucose-6-phosphate to fructose-6-phosphate. This chain is Glucose-6-phosphate isomerase, found in Synechococcus sp. (strain CC9902).